Reading from the N-terminus, the 222-residue chain is Small ribosomal subunit protein uS3 (222 aa).

A KH type-2 domain is found at 39 to 107 (IRKYIKTKFY…QININIAEIK (69 aa)).

The protein belongs to the universal ribosomal protein uS3 family. In terms of assembly, part of the 30S ribosomal subunit. Forms a tight complex with proteins S10 and S14.

Binds the lower part of the 30S subunit head. Binds mRNA in the 70S ribosome, positioning it for translation. This chain is Small ribosomal subunit protein uS3, found in Carboxydothermus hydrogenoformans (strain ATCC BAA-161 / DSM 6008 / Z-2901).